We begin with the raw amino-acid sequence, 201 residues long: Probable phosphopantothenoylcysteine decarboxylase (201 aa).

FMN-binding positions include 20 to 22 (GSV), 45 to 47 (SKS), 98 to 101 (SANT), and A132. Substrate is bound by residues N134 and 164 to 166 (KLA). C167 acts as the Proton donor in catalysis. M175 lines the substrate pocket.

It belongs to the HFCD (homooligomeric flavin containing Cys decarboxylase) superfamily. In terms of assembly, homotrimer. Requires FMN as cofactor. Expressed in roots, shoots, leaves, flowers, developing siliques and seeds.

The enzyme catalyses N-[(R)-4-phosphopantothenoyl]-L-cysteine + H(+) = (R)-4'-phosphopantetheine + CO2. The protein operates within cofactor biosynthesis; coenzyme A biosynthesis; CoA from (R)-pantothenate: step 3/5. Its function is as follows. Involved in plant growth and salt and osmotic tolerance. Catalyzes the decarboxylation of 4'-phosphopantothenoylcysteine to 4'-phosphopantetheine, a key step in coenzyme A biosynthesis. The enzyme is also able to decarboxylate pantothenoylcysteine to pantothenoylcysteamine. The polypeptide is Probable phosphopantothenoylcysteine decarboxylase (HAL3B) (Arabidopsis thaliana (Mouse-ear cress)).